We begin with the raw amino-acid sequence, 121 residues long: Small ribosomal subunit protein uS13 (121 aa).

A disordered region spans residues 91–121; it reads HRRGLPVRGQNTKNNARTRKGPRKTVANKKK. Positions 106–121 are enriched in basic residues; the sequence is ARTRKGPRKTVANKKK.

The protein belongs to the universal ribosomal protein uS13 family. As to quaternary structure, part of the 30S ribosomal subunit. Forms a loose heterodimer with protein S19. Forms two bridges to the 50S subunit in the 70S ribosome.

In terms of biological role, located at the top of the head of the 30S subunit, it contacts several helices of the 16S rRNA. In the 70S ribosome it contacts the 23S rRNA (bridge B1a) and protein L5 of the 50S subunit (bridge B1b), connecting the 2 subunits; these bridges are implicated in subunit movement. Contacts the tRNAs in the A and P-sites. The polypeptide is Small ribosomal subunit protein uS13 (Lysinibacillus sphaericus (strain C3-41)).